Here is a 301-residue protein sequence, read N- to C-terminus: Putative S-adenosyl-L-methionine-dependent methyltransferase MUL_0450 (301 aa).

S-adenosyl-L-methionine is bound by residues aspartate 127 and 156 to 157 (DL).

This sequence belongs to the UPF0677 family.

In terms of biological role, exhibits S-adenosyl-L-methionine-dependent methyltransferase activity. This Mycobacterium ulcerans (strain Agy99) protein is Putative S-adenosyl-L-methionine-dependent methyltransferase MUL_0450.